We begin with the raw amino-acid sequence, 350 residues long: Flap endonuclease 1 (350 aa).

The interval 1–102 (MGVTALRELI…REIERRQKLK (102 aa)) is N-domain. Mg(2+)-binding residues include D31, D84, E156, E158, D177, D179, and D240. The interval 120–261 (EARKYAQMSA…TALRYVKSYG (142 aa)) is I-domain. The tract at residues 339-347 (KQSTLDMFF) is interaction with PCNA.

It belongs to the XPG/RAD2 endonuclease family. FEN1 subfamily. As to quaternary structure, interacts with PCNA. PCNA stimulates the nuclease activity without altering cleavage specificity. Mg(2+) is required as a cofactor.

Functionally, structure-specific nuclease with 5'-flap endonuclease and 5'-3' exonuclease activities involved in DNA replication and repair. During DNA replication, cleaves the 5'-overhanging flap structure that is generated by displacement synthesis when DNA polymerase encounters the 5'-end of a downstream Okazaki fragment. Binds the unpaired 3'-DNA end and kinks the DNA to facilitate 5' cleavage specificity. Cleaves one nucleotide into the double-stranded DNA from the junction in flap DNA, leaving a nick for ligation. Also involved in the base excision repair (BER) pathway. Acts as a genome stabilization factor that prevents flaps from equilibrating into structures that lead to duplications and deletions. Also possesses 5'-3' exonuclease activity on nicked or gapped double-stranded DNA. The sequence is that of Flap endonuclease 1 from Ignicoccus hospitalis (strain KIN4/I / DSM 18386 / JCM 14125).